The primary structure comprises 465 residues: Cytochrome c peroxidase Ccp (465 aa).

Residues 1-6 (MKMVSR) lie on the Cytoplasmic side of the membrane. A helical transmembrane segment spans residues 7 to 27 (ITAIGLAGVAICYLGLSGYVW). The Periplasmic portion of the chain corresponds to 28 to 465 (YHDNKRSKQA…VYTPYMQDKQ (438 aa)). 3 consecutive Cytochrome c domains span residues 42–155 (SAVS…AKQR), 185–287 (QKVA…EKDP), and 337–454 (AQQK…HSLN). Residues Cys59, Cys62, His63, Met125, Cys207, Cys210, His211, Cys351, Cys354, His355, and Met429 each contribute to the heme c site.

The recombinant enzyme lacking its transmembrane domain is a monomer in solution. The cofactor is heme c.

It is found in the cell inner membrane. With respect to regulation, does not require reductive activation for maximum activity, as peroxidatic heme is high-spin His/OH(-) 6-coordinated. Calcium ions are needed to attain maximum peroxidase activity. Functionally, cytochrome peroxidase that enables anaerobic respiration with H(2)O(2) as a terminal electron acceptor. It receives electrons from the quinol pool. Menaquinol is probably the electron donor in vivo. It can use menadiol (a menaquinol analog), hydroquinone, duroquinol and the artificial electron donor ABTS(2-) in vitro, but only menadiol and hydroquinone can efficiently transfer electrons to Ccp, maintaining the catalytic activity of the enzyme. It enables E.coli to grow on a nonfermentable carbon source when H(2)O(2) is supplied. Plays a role in the peroxide stress response under anaerobic conditions. However, it does not degrade H(2)O(2) quickly enough to lower the periplasmic H(2)O(2) level below that of the surrounding medium and protect the cell from its toxic effects. The polypeptide is Cytochrome c peroxidase Ccp (Escherichia coli (strain K12)).